A 511-amino-acid polypeptide reads, in one-letter code: Exodeoxyribonuclease 7 large subunit (511 aa).

Belongs to the XseA family. Heterooligomer composed of large and small subunits.

The protein resides in the cytoplasm. It catalyses the reaction Exonucleolytic cleavage in either 5'- to 3'- or 3'- to 5'-direction to yield nucleoside 5'-phosphates.. Bidirectionally degrades single-stranded DNA into large acid-insoluble oligonucleotides, which are then degraded further into small acid-soluble oligonucleotides. This chain is Exodeoxyribonuclease 7 large subunit, found in Brucella melitensis biotype 1 (strain ATCC 23456 / CCUG 17765 / NCTC 10094 / 16M).